The sequence spans 477 residues: Probable ribonuclease FAU-1 (477 aa).

It belongs to the FAU-1 family.

Functionally, probable RNase involved in rRNA stability through maturation and/or degradation of precursor rRNAs. Binds to RNA in loop regions with AU-rich sequences. The chain is Probable ribonuclease FAU-1 from Staphylothermus marinus (strain ATCC 43588 / DSM 3639 / JCM 9404 / F1).